The primary structure comprises 284 residues: Pantothenate synthetase (284 aa).

Methionine 30–histidine 37 lines the ATP pocket. Histidine 37 (proton donor) is an active-site residue. Glutamine 61 is a (R)-pantoate binding site. Glutamine 61 serves as a coordination point for beta-alanine. Glycine 149–aspartate 152 contacts ATP. Residue glutamine 155 participates in (R)-pantoate binding. Residues isoleucine 178 and leucine 186 to arginine 189 each bind ATP.

It belongs to the pantothenate synthetase family. Homodimer.

The protein resides in the cytoplasm. The enzyme catalyses (R)-pantoate + beta-alanine + ATP = (R)-pantothenate + AMP + diphosphate + H(+). It participates in cofactor biosynthesis; (R)-pantothenate biosynthesis; (R)-pantothenate from (R)-pantoate and beta-alanine: step 1/1. Catalyzes the condensation of pantoate with beta-alanine in an ATP-dependent reaction via a pantoyl-adenylate intermediate. This is Pantothenate synthetase from Salmonella heidelberg (strain SL476).